We begin with the raw amino-acid sequence, 210 residues long: ATP-dependent Clp protease proteolytic subunit (210 aa).

Ser-106 serves as the catalytic Nucleophile. Residue His-131 is part of the active site.

Belongs to the peptidase S14 family. Fourteen ClpP subunits assemble into 2 heptameric rings which stack back to back to give a disk-like structure with a central cavity, resembling the structure of eukaryotic proteasomes.

The protein localises to the cytoplasm. It carries out the reaction Hydrolysis of proteins to small peptides in the presence of ATP and magnesium. alpha-casein is the usual test substrate. In the absence of ATP, only oligopeptides shorter than five residues are hydrolyzed (such as succinyl-Leu-Tyr-|-NHMec, and Leu-Tyr-Leu-|-Tyr-Trp, in which cleavage of the -Tyr-|-Leu- and -Tyr-|-Trp bonds also occurs).. Functionally, cleaves peptides in various proteins in a process that requires ATP hydrolysis. Has a chymotrypsin-like activity. Plays a major role in the degradation of misfolded proteins. In Rhodopseudomonas palustris (strain BisB18), this protein is ATP-dependent Clp protease proteolytic subunit.